Here is a 545-residue protein sequence, read N- to C-terminus: Glucose-6-phosphate isomerase (545 aa).

Glu-351 (proton donor) is an active-site residue. Catalysis depends on residues His-382 and Lys-510.

The protein belongs to the GPI family.

It is found in the cytoplasm. It catalyses the reaction alpha-D-glucose 6-phosphate = beta-D-fructose 6-phosphate. Its pathway is carbohydrate biosynthesis; gluconeogenesis. The protein operates within carbohydrate degradation; glycolysis; D-glyceraldehyde 3-phosphate and glycerone phosphate from D-glucose: step 2/4. Functionally, catalyzes the reversible isomerization of glucose-6-phosphate to fructose-6-phosphate. The sequence is that of Glucose-6-phosphate isomerase from Shewanella sp. (strain MR-4).